We begin with the raw amino-acid sequence, 280 residues long: MGSSQSTPKVQDANADAERIRKAQHSMAAAGGGSQCPLTPEQRAAASGENCGAGGACPVGADKASINPLNNELEHPNQKPAPDQPFALPTKREKSTIPKAGTETETWTYPSPQMFWNAMLKKGWRWQDDSLSKSDMENIISIHNANNEEAWREVLKWENLLHPECAEPKLKSFKGDAKNLSPRARFRNLFLGYDLPFDRHDWIVDRCGTKQVQYVIDYYDGGAVDPSSKLFTILDVRPAVNDIGNIWDRMVVAYWRFKFETLGFTPSLPIPPTEGHNVNH.

A disordered region spans residues Met-1–Ser-95. HRM repeat units follow at residues Gln-35–Pro-40 and Ala-56–Ala-61.

Belongs to the cytochrome c-type heme lyase family.

It is found in the mitochondrion inner membrane. The enzyme catalyses holo-[cytochrome c] = apo-[cytochrome c] + heme b. Functionally, probable lyase that catalyzes the covalent linking of the heme group to the cytochrome C apoprotein to produce the mature functional cytochrome. The chain is Probable holocytochrome-c-type synthase (cchl-1) from Caenorhabditis elegans.